The following is a 448-amino-acid chain: Probable alpha-galactosidase B (448 aa).

Residues Met1–Ala23 form the signal peptide. 2 disulfide bridges follow: Cys46-Cys78 and Cys128-Cys158. Asp156 functions as the Nucleophile in the catalytic mechanism. 2 N-linked (GlcNAc...) asparagine glycosylation sites follow: Asn163 and Asn181. Glu226 to Ala230 contributes to the substrate binding site. Residue Asn237 is glycosylated (N-linked (GlcNAc...) asparagine). Asp248 functions as the Proton donor in the catalytic mechanism.

This sequence belongs to the glycosyl hydrolase 27 family.

The protein resides in the secreted. It catalyses the reaction Hydrolysis of terminal, non-reducing alpha-D-galactose residues in alpha-D-galactosides, including galactose oligosaccharides, galactomannans and galactolipids.. Hydrolyzes a variety of simple alpha-D-galactoside as well as more complex molecules such as oligosaccharides and polysaccharides. The protein is Probable alpha-galactosidase B (aglB) of Aspergillus clavatus (strain ATCC 1007 / CBS 513.65 / DSM 816 / NCTC 3887 / NRRL 1 / QM 1276 / 107).